Consider the following 273-residue polypeptide: Pantothenate synthetase (273 aa).

27–34 (MGALHNGH) provides a ligand contact to ATP. Histidine 34 functions as the Proton donor in the catalytic mechanism. Position 58 (glutamine 58) interacts with (R)-pantoate. Position 58 (glutamine 58) interacts with beta-alanine. 144–147 (GKKD) is a binding site for ATP. Position 150 (glutamine 150) interacts with (R)-pantoate. Residues valine 173 and 181–184 (LSSR) each bind ATP.

The protein belongs to the pantothenate synthetase family. In terms of assembly, homodimer.

It localises to the cytoplasm. It carries out the reaction (R)-pantoate + beta-alanine + ATP = (R)-pantothenate + AMP + diphosphate + H(+). The protein operates within cofactor biosynthesis; (R)-pantothenate biosynthesis; (R)-pantothenate from (R)-pantoate and beta-alanine: step 1/1. Catalyzes the condensation of pantoate with beta-alanine in an ATP-dependent reaction via a pantoyl-adenylate intermediate. This is Pantothenate synthetase from Campylobacter fetus subsp. fetus (strain 82-40).